We begin with the raw amino-acid sequence, 89 residues long: Sec-independent protein translocase protein TatA (89 aa).

The chain crosses the membrane as a helical span at residues 1 to 21 (MFGLSPAQLIILLVVILLIFG).

The protein belongs to the TatA/E family. As to quaternary structure, the Tat system comprises two distinct complexes: a TatABC complex, containing multiple copies of TatA, TatB and TatC subunits, and a separate TatA complex, containing only TatA subunits. Substrates initially bind to the TatABC complex, which probably triggers association of the separate TatA complex to form the active translocon.

It localises to the cell inner membrane. In terms of biological role, part of the twin-arginine translocation (Tat) system that transports large folded proteins containing a characteristic twin-arginine motif in their signal peptide across membranes. TatA could form the protein-conducting channel of the Tat system. The polypeptide is Sec-independent protein translocase protein TatA (Haemophilus influenzae (strain ATCC 51907 / DSM 11121 / KW20 / Rd)).